A 637-amino-acid polypeptide reads, in one-letter code: Interleukin-17 receptor E (637 aa).

Positions 1-24 (MGSPRLAALLLSQPLLFICLAVSA) are cleaved as a signal peptide. The Extracellular portion of the chain corresponds to 25-415 (QVACPCLPRW…LCPDVSHRHL (391 aa)). N-linked (GlcNAc...) asparagine glycosylation is found at Asn-278 and Asn-307. Residues 416–436 (GLLILALLGLTTLLGVVLVLF) form a helical membrane-spanning segment. Residues 437–637 (CRRLLPGPGR…TNSPCGFSCL (201 aa)) are Cytoplasmic-facing. An SEFIR domain is found at 447 to 583 (TRPVLLLHAA…LLRDLPRLLR (137 aa)).

In terms of assembly, forms heterodimers with IL17RE; the heterodimer binds IL17C.

Its subcellular location is the cell membrane. Functionally, specific functional receptor for IL17C, signaling through the NF-kappa-B and MAPK pathways. Requires TRAF3IP2 /ACT1 for signaling. Crucial regulator in innate immunity to bacterial pathogens. This chain is Interleukin-17 receptor E (Il17re), found in Rattus norvegicus (Rat).